A 142-amino-acid chain; its full sequence is UPF0102 protein Bcen2424_0290 (142 aa).

Residues 1–19 are compositionally biased toward low complexity; that stretch reads MCHAAPARPEGARGRPPSG. Residues 1 to 27 are disordered; it reads MCHAAPARPEGARGRPPSGDNFSGAAR.

It belongs to the UPF0102 family.

This Burkholderia cenocepacia (strain HI2424) protein is UPF0102 protein Bcen2424_0290.